A 173-amino-acid polypeptide reads, in one-letter code: Acetyl-CoA decarbonylase/synthase complex subunit epsilon (173 aa).

Belongs to the CdhB family. Heterotetramer of two alpha and two epsilon subunits. The ACDS complex is made up of alpha, epsilon, beta, gamma and delta subunits with a probable stoichiometry of (alpha(2)epsilon(2))(4)-beta(8)-(gamma(1)delta(1))(8).

Its pathway is one-carbon metabolism; methanogenesis from acetate. Functionally, part of a complex that catalyzes the reversible cleavage of acetyl-CoA, allowing growth on acetate as sole source of carbon and energy. The alpha-epsilon subcomponent functions as a carbon monoxide dehydrogenase. The precise role of the epsilon subunit is unclear; it may have a stabilizing role within the alpha(2)epsilon(2) component and/or be involved in electron transfer to FAD during a potential FAD-mediated CO oxidation. The protein is Acetyl-CoA decarbonylase/synthase complex subunit epsilon of Methanothermobacter thermautotrophicus (strain ATCC 29096 / DSM 1053 / JCM 10044 / NBRC 100330 / Delta H) (Methanobacterium thermoautotrophicum).